A 230-amino-acid polypeptide reads, in one-letter code: 2-phytyl-1,4-naphtoquinone methyltransferase (230 aa).

This sequence belongs to the class I-like SAM-binding methyltransferase superfamily. MenG/UbiE family.

It catalyses the reaction demethylphylloquinol + S-adenosyl-L-methionine = phylloquinol + S-adenosyl-L-homocysteine + H(+). The protein operates within cofactor biosynthesis; phylloquinone biosynthesis. In terms of biological role, methyltransferase required for the conversion of 2-phytyl-1,4-beta-naphthoquinol to phylloquinol. The protein is 2-phytyl-1,4-naphtoquinone methyltransferase of Nostoc punctiforme (strain ATCC 29133 / PCC 73102).